A 310-amino-acid chain; its full sequence is MTVDELKTKKIGVLMGGLSAEREVSLKSGAAVHQALLARGYDAVAIDVDRDIAQVLVREWVDVAFIALHGRYGEDGAIQGLLEIMGIPYTGSGVLASALAMNKIFAKQAFQAARLTVAPYKVFCRGDKAALAELEFSLPVVVKPSQEGSSVGVSIVKKESEFAAAMKEAFRYDREILVEQFIKGSEVQVGILEDKALGAIEIVPKNEFYDFDAKYSPGMAEHILPARLPAELYRKVLRAGEDAHRALGCSGYSRVDFLVTEEGACYILEVNTLPGMTDLSLLPEIARGSGIGFEDLVERILAAAALKISQ.

In terms of domain architecture, ATP-grasp spans 107–302 (KQAFQAARLT…FEDLVERILA (196 aa)). Residue 135–188 (EFSLPVVVKPSQEGSSVGVSIVKKESEFAAAMKEAFRYDREILVEQFIKGSEVQ) participates in ATP binding. Mg(2+) contacts are provided by aspartate 256, glutamate 269, and asparagine 271.

Belongs to the D-alanine--D-alanine ligase family. The cofactor is Mg(2+). Mn(2+) is required as a cofactor.

It localises to the cytoplasm. It carries out the reaction 2 D-alanine + ATP = D-alanyl-D-alanine + ADP + phosphate + H(+). It functions in the pathway cell wall biogenesis; peptidoglycan biosynthesis. Functionally, cell wall formation. The polypeptide is D-alanine--D-alanine ligase (Geotalea uraniireducens (strain Rf4) (Geobacter uraniireducens)).